A 337-amino-acid chain; its full sequence is tRNA N6-adenosine threonylcarbamoyltransferase (337 aa).

2 residues coordinate Fe cation: histidine 111 and histidine 115. Substrate-binding positions include 134–138 (LVSGG), aspartate 167, glycine 180, and asparagine 272. A Fe cation-binding site is contributed by aspartate 300.

This sequence belongs to the KAE1 / TsaD family. Fe(2+) is required as a cofactor.

Its subcellular location is the cytoplasm. The enzyme catalyses L-threonylcarbamoyladenylate + adenosine(37) in tRNA = N(6)-L-threonylcarbamoyladenosine(37) in tRNA + AMP + H(+). Required for the formation of a threonylcarbamoyl group on adenosine at position 37 (t(6)A37) in tRNAs that read codons beginning with adenine. Is involved in the transfer of the threonylcarbamoyl moiety of threonylcarbamoyl-AMP (TC-AMP) to the N6 group of A37, together with TsaE and TsaB. TsaD likely plays a direct catalytic role in this reaction. The polypeptide is tRNA N6-adenosine threonylcarbamoyltransferase (Nitrosomonas europaea (strain ATCC 19718 / CIP 103999 / KCTC 2705 / NBRC 14298)).